A 119-amino-acid polypeptide reads, in one-letter code: Large ribosomal subunit protein uL18 (119 aa).

This sequence belongs to the universal ribosomal protein uL18 family. In terms of assembly, part of the 50S ribosomal subunit; part of the 5S rRNA/L5/L18/L25 subcomplex. Contacts the 5S and 23S rRNAs.

In terms of biological role, this is one of the proteins that bind and probably mediate the attachment of the 5S RNA into the large ribosomal subunit, where it forms part of the central protuberance. This is Large ribosomal subunit protein uL18 from Cupriavidus taiwanensis (strain DSM 17343 / BCRC 17206 / CCUG 44338 / CIP 107171 / LMG 19424 / R1) (Ralstonia taiwanensis (strain LMG 19424)).